A 1169-amino-acid polypeptide reads, in one-letter code: Topoisomerase 1-associated factor 1 (1169 aa).

Disordered stretches follow at residues 573–600 and 900–1150; these read RRKA…DRLE and YGGG…DAPI. Acidic residues-rich tracts occupy residues 583-599 and 917-928; these read GNDE…EDRL and FGDDSEGEDEVP. The span at 931–940 shows a compositional bias: pro residues; it reads PLFPPNPRAA. A compositionally biased stretch (acidic residues) spans 958 to 972; the sequence is PDDEDEDDSVDEETL. 2 stretches are compositionally biased toward basic and acidic residues: residues 973 to 1000 and 1009 to 1024; these read EERR…HASD and KEFF…EQAK. Residues 1100–1112 show a composition bias toward acidic residues; that stretch reads GEEDDGFNFDDDL. Residues 1113–1140 show a composition bias toward basic and acidic residues; sequence VFSRDREKLLGSAGNEEKDSNRPDKAMA.

It belongs to the timeless family.

Its subcellular location is the nucleus. Functionally, involved in chromosome segregation during meiosis and DNA damage repair. The polypeptide is Topoisomerase 1-associated factor 1 (tof1) (Aspergillus niger (strain ATCC MYA-4892 / CBS 513.88 / FGSC A1513)).